A 65-amino-acid chain; its full sequence is Small ribosomal subunit protein eS27 (65 aa).

Residues cysteine 20, cysteine 23, cysteine 39, and cysteine 42 each coordinate Zn(2+). The C4-type zinc finger occupies 20–42 (CIDCGNEQIVFSNPATTVRCLVC).

Belongs to the eukaryotic ribosomal protein eS27 family. Part of the 30S ribosomal subunit. Zn(2+) is required as a cofactor.

The sequence is that of Small ribosomal subunit protein eS27 from Thermococcus onnurineus (strain NA1).